The chain runs to 419 residues: Voltage-gated potassium channel subunit beta-1 (419 aa).

Residues 1–52 (MLAARTGAAGSQISEENTKLRRQSGFSVAGKDKSPKKASENAKDSSLSPSGE) are disordered. Residues 30-43 (GKDKSPKKASENAK) are compositionally biased toward basic and acidic residues. NADP(+) contacts are provided by Thr-108, Trp-109, Gln-115, and Asp-137. The active-site Proton donor/acceptor is Tyr-142. The NADP(+) site is built by Asn-210, Ser-240, Arg-241, Gln-266, Trp-295, Ser-296, Pro-297, Leu-298, Ala-299, Cys-300, Lys-306, Arg-316, Gly-375, Ser-377, Gln-381, Glu-384, and Asn-385.

This sequence belongs to the shaker potassium channel beta subunit family. In terms of assembly, homotetramer. Interaction with tetrameric potassium channel alpha subunits gives rise to a heterooctamer. Identified in potassium channel complexes containing KCNA1, KCNA2, KCNA4, KCNA5, KCNA6, KCNAB1 and KCNAB2. Part of a complex containing KCNA1, KCNA4 and LGI1; interaction with LGI1 inhibits down-regulation of KCNA1 channel activity. Interacts with the dimer formed by GNB1 and GNG2; this enhances KCNA1 binding. Interacts with SQSTM1. In brain, expression is most prominent in caudate nucleus, hippocampus and thalamus. Significant expression also detected in amygdala and subthalamic nucleus. Also expressed in both healthy and cardiomyopathic heart. Up to four times more abundant in left ventricle than left atrium.

The protein localises to the cytoplasm. The protein resides in the membrane. It is found in the cell membrane. It catalyses the reaction a primary alcohol + NADP(+) = an aldehyde + NADPH + H(+). The catalysed reaction is a secondary alcohol + NADP(+) = a ketone + NADPH + H(+). In terms of biological role, regulatory subunit of the voltage-gated potassium (Kv) Shaker channels composed of pore-forming and potassium-conducting alpha subunits and of regulatory beta subunits. The beta-1/KCNAB1 cytoplasmic subunit mediates closure of delayed rectifier potassium channels by physically obstructing the pore via its N-terminal domain and increases the speed of channel closure for other family members. Promotes the inactivation of Kv1.1/KCNA1, Kv1.2/KCNA2, Kv1.4/KCNA4, Kv1.5/KCNA5 and Kv1.6/KCNA6 alpha subunit-containing channels. Displays nicotinamide adenine dinucleotide phosphate (NADPH)-dependent aldoketoreductase activity by catalyzing the NADPH-dependent reduction of a variety of endogenous aldehydes and ketones. The binding of NADPH is required for efficient down-regulation of potassium channel activity. Oxidation of the bound NADPH restrains N-terminal domain from blocking the channel, thereby decreasing N-type inactivation of potassium channel activity. Functionally, isoform KvB1.2 shows no effect on KCNA1, KCNA2 or KCNB1. This Homo sapiens (Human) protein is Voltage-gated potassium channel subunit beta-1.